Here is a 225-residue protein sequence, read N- to C-terminus: Ribosomal RNA large subunit methyltransferase E (225 aa).

Residues G76, W78, D99, D115, and D139 each contribute to the S-adenosyl-L-methionine site. K179 serves as the catalytic Proton acceptor.

Belongs to the class I-like SAM-binding methyltransferase superfamily. RNA methyltransferase RlmE family.

The protein resides in the cytoplasm. It catalyses the reaction uridine(2552) in 23S rRNA + S-adenosyl-L-methionine = 2'-O-methyluridine(2552) in 23S rRNA + S-adenosyl-L-homocysteine + H(+). Its function is as follows. Specifically methylates the uridine in position 2552 of 23S rRNA at the 2'-O position of the ribose in the fully assembled 50S ribosomal subunit. The sequence is that of Ribosomal RNA large subunit methyltransferase E from Afipia carboxidovorans (strain ATCC 49405 / DSM 1227 / KCTC 32145 / OM5) (Oligotropha carboxidovorans).